Reading from the N-terminus, the 147-residue chain is Large ribosomal subunit protein uL15 (147 aa).

Basic and acidic residues predominate over residues 1 to 14 (MKLHELRPAEGAVR). A disordered region spans residues 1–54 (MKLHELRPAEGAVRDRKRKGRGTASGLGKTAGRGSNGQKARSGGGVRPGFEGGQ). 2 stretches are compositionally biased toward gly residues: residues 23-35 (TASG…GRGS) and 42-52 (SGGGVRPGFEG).

This sequence belongs to the universal ribosomal protein uL15 family. In terms of assembly, part of the 50S ribosomal subunit.

Its function is as follows. Binds to the 23S rRNA. This Alkaliphilus oremlandii (strain OhILAs) (Clostridium oremlandii (strain OhILAs)) protein is Large ribosomal subunit protein uL15.